The following is a 441-amino-acid chain: Dolichyl-diphosphooligosaccharide--protein glycosyltransferase 48 kDa subunit (441 aa).

Positions 1–28 (MKMVPRLAVRAWPLCGLLLAALGCVCAS) are cleaved as a signal peptide. At 29 to 412 (GPRTLVLLDN…YERFIPSAYP (384 aa)) the chain is on the lumenal side. The helical transmembrane segment at 413–432 (YYASAFSMMAGLFLFSVVFL) threads the bilayer. Topologically, residues 433–441 (HMKEKEKSD) are cytoplasmic.

Belongs to the DDOST 48 kDa subunit family. In terms of assembly, component of the oligosaccharyltransferase (OST) complex. OST exists in two different complex forms which contain common core subunits RPN1, RPN2, OST48, OST4, DAD1 and TMEM258, either STT3A or STT3B as catalytic subunits, and form-specific accessory subunits. STT3A complex assembly occurs through the formation of 3 subcomplexes. Subcomplex 1 contains RPN1 and TMEM258, subcomplex 2 contains the STT3A-specific subunits STT3A, DC2/OSTC, and KCP2 as well as the core subunit OST4, and subcomplex 3 contains RPN2, DAD1, and OST48. The STT3A complex can form stable complexes with the Sec61 complex or with both the Sec61 and TRAP complexes. Interacts with SMIM22.

The protein resides in the endoplasmic reticulum membrane. The protein operates within protein modification; protein glycosylation. In terms of biological role, subunit of the oligosaccharyl transferase (OST) complex that catalyzes the initial transfer of a defined glycan (Glc(3)Man(9)GlcNAc(2) in eukaryotes) from the lipid carrier dolichol-pyrophosphate to an asparagine residue within an Asn-X-Ser/Thr consensus motif in nascent polypeptide chains, the first step in protein N-glycosylation. N-glycosylation occurs cotranslationally and the complex associates with the Sec61 complex at the channel-forming translocon complex that mediates protein translocation across the endoplasmic reticulum (ER). All subunits are required for a maximal enzyme activity. Required for the assembly of both SST3A- and SS3B-containing OST complexes. In Rattus norvegicus (Rat), this protein is Dolichyl-diphosphooligosaccharide--protein glycosyltransferase 48 kDa subunit.